Here is a 305-residue protein sequence, read N- to C-terminus: Oxidoreductase OpS7 (305 aa).

The protein belongs to the oxidoreductase OpS7 family.

The protein operates within secondary metabolite biosynthesis. In terms of biological role, oxidoreductase; part of the gene cluster that mediates the biosynthesis of the bibenzoquinone oosporein, a metabolite required for fungal virulence that acts by evading host immunity to facilitate fungal multiplication in insects. The non-reducing polyketide synthase OpS1 produces orsellinic acid by condensing acetyl-CoA with 3 malonyl-CoA units. Orsellinic acid is then hydroxylated to benzenetriol by the hydroxylase OpS4. The intermediate is oxidized either nonenzymatically to 5,5'-dideoxy-oosporein or enzymatically to benzenetetrol by the oxidoreductase OpS7. The latter is further dimerized to oosporein by the catalase OpS5. OpS6 probably functions en route for protecting cells against oxidative stress by scavenging any leaked free radical form of benzenetetrol by activating the thiol group of glutathione. This is Oxidoreductase OpS7 from Beauveria bassiana (strain ARSEF 2860) (White muscardine disease fungus).